A 78-amino-acid chain; its full sequence is Small ribosomal subunit protein uS17 (78 aa).

It belongs to the universal ribosomal protein uS17 family. Part of the 30S ribosomal subunit.

Functionally, one of the primary rRNA binding proteins, it binds specifically to the 5'-end of 16S ribosomal RNA. The polypeptide is Small ribosomal subunit protein uS17 (Allorhizobium ampelinum (strain ATCC BAA-846 / DSM 112012 / S4) (Agrobacterium vitis (strain S4))).